We begin with the raw amino-acid sequence, 1056 residues long: PH and SEC7 domain-containing protein 4 (1056 aa).

Residues 25–42 (LEPHPGECPRETCSHEDP) are compositionally biased toward basic and acidic residues. 6 disordered regions span residues 25–71 (LEPH…SGVE), 87–149 (CQEQ…QNRS), 195–239 (LPGD…QWGA), 340–362 (GAPA…APSA), 388–533 (VQPW…GDVQ), and 546–581 (LRTP…LANG). Composition is skewed to polar residues over residues 88–99 (QEQTRATDPPES) and 128–137 (NTASPGSPVN). Phosphoserine is present on residues S131, S134, and S143. Residues 207–220 (ENEDSGEDSSEPEG) show a composition bias toward acidic residues. S413 carries the phosphoserine modification. The span at 414 to 423 (QDRDEREGGH) shows a compositional bias: basic and acidic residues. Residues 438 to 456 (RSPASSPEPSSPESESRGP) are compositionally biased toward low complexity. A phosphoserine mark is found at S448, S469, and S491. Composition is skewed to polar residues over residues 466–476 (QEGSPQLQHHS) and 486–502 (DASQ…QPSS). The segment covering 504 to 522 (KKKEAGEAPKPGEEVKSEG) has biased composition (basic and acidic residues). The SEC7 domain maps to 544–736 (ENLRTPMNSS…KALYWSIRSE (193 aa)). The span at 548–567 (TPMNSSWLPGSPMPQAQSPE) shows a compositional bias: polar residues. The PH domain occupies 776-892 (PTYKQGILAR…WIARINLAAA (117 aa)). Residues 921-976 (SSLEEQHRSHENCLDAAADDLLDLQRNLPERRGRGRELEEHRLRKEYLEYEKTRYE) adopt a coiled-coil conformation. Positions 1004-1056 (AGGTREPKLSLKKSHSSPSLHQDEAPTTAKVKRNISERRTYRKIIPKRNRNQL) are disordered. Residues S1019 and S1022 each carry the phosphoserine modification. Positions 1043–1056 (TYRKIIPKRNRNQL) are enriched in basic residues.

In terms of tissue distribution, widely expressed. Highest levels of expression are found in placenta, pancreas, spleen, thymus and peripheral blood.

It localises to the cell membrane. Its subcellular location is the cell projection. The protein resides in the ruffle membrane. Guanine nucleotide exchange factor for ARF6 and ARL14/ARF7. Through ARL14 activation, controls the movement of MHC class II-containing vesicles along the actin cytoskeleton in dendritic cells. Involved in membrane recycling. Interacts with several phosphatidylinositol phosphate species, including phosphatidylinositol 3,4-bisphosphate, phosphatidylinositol 3,5-bisphosphate and phosphatidylinositol 4,5-bisphosphate. The chain is PH and SEC7 domain-containing protein 4 (PSD4) from Homo sapiens (Human).